A 113-amino-acid polypeptide reads, in one-letter code: T cell receptor alpha variable 8-1 (113 aa).

An N-terminal signal peptide occupies residues 1–20; sequence MLLLLIPVLGMIFALRDARA. The Ig-like domain occupies 21–113; it reads QSVSQHNHHV…DTAEYFCAVN (93 aa). A disulfide bridge links cysteine 42 with cysteine 110. Residue asparagine 43 is glycosylated (N-linked (GlcNAc...) asparagine).

Alpha-beta TR is a heterodimer composed of an alpha and beta chain; disulfide-linked. The alpha-beta TR is associated with the transmembrane signaling CD3 coreceptor proteins to form the TR-CD3 (TcR or TCR). The assembly of alpha-beta TR heterodimers with CD3 occurs in the endoplasmic reticulum where a single alpha-beta TR heterodimer associates with one CD3D-CD3E heterodimer, one CD3G-CD3E heterodimer and one CD247 homodimer forming a stable octameric structure. CD3D-CD3E and CD3G-CD3E heterodimers preferentially associate with TR alpha and TR beta chains, respectively. The association of the CD247 homodimer is the last step of TcR assembly in the endoplasmic reticulum and is required for transport to the cell surface.

It localises to the cell membrane. In terms of biological role, v region of the variable domain of T cell receptor (TR) alpha chain that participates in the antigen recognition. Alpha-beta T cell receptors are antigen specific receptors which are essential to the immune response and are present on the cell surface of T lymphocytes. Recognize peptide-major histocompatibility (MH) (pMH) complexes that are displayed by antigen presenting cells (APC), a prerequisite for efficient T cell adaptive immunity against pathogens. Binding of alpha-beta TR to pMH complex initiates TR-CD3 clustering on the cell surface and intracellular activation of LCK that phosphorylates the ITAM motifs of CD3G, CD3D, CD3E and CD247 enabling the recruitment of ZAP70. In turn ZAP70 phosphorylates LAT, which recruits numerous signaling molecules to form the LAT signalosome. The LAT signalosome propagates signal branching to three major signaling pathways, the calcium, the mitogen-activated protein kinase (MAPK) kinase and the nuclear factor NF-kappa-B (NF-kB) pathways, leading to the mobilization of transcription factors that are critical for gene expression and essential for T cell growth and differentiation. The T cell repertoire is generated in the thymus, by V-(D)-J rearrangement. This repertoire is then shaped by intrathymic selection events to generate a peripheral T cell pool of self-MH restricted, non-autoaggressive T cells. Post-thymic interaction of alpha-beta TR with the pMH complexes shapes TR structural and functional avidity. This chain is T cell receptor alpha variable 8-1, found in Homo sapiens (Human).